The following is a 291-amino-acid chain: Succinate--CoA ligase [ADP-forming] subunit alpha 1 (291 aa).

Residues 20-23, Lys46, and 99-101 contribute to the CoA site; these read TGFQ and VTE. A substrate-binding site is contributed by Tyr162. His249 functions as the Tele-phosphohistidine intermediate in the catalytic mechanism.

This sequence belongs to the succinate/malate CoA ligase alpha subunit family. In terms of assembly, heterotetramer of two alpha and two beta subunits.

The enzyme catalyses succinate + ATP + CoA = succinyl-CoA + ADP + phosphate. It carries out the reaction GTP + succinate + CoA = succinyl-CoA + GDP + phosphate. It participates in carbohydrate metabolism; tricarboxylic acid cycle; succinate from succinyl-CoA (ligase route): step 1/1. Its function is as follows. Succinyl-CoA synthetase functions in the citric acid cycle (TCA), coupling the hydrolysis of succinyl-CoA to the synthesis of either ATP or GTP and thus represents the only step of substrate-level phosphorylation in the TCA. The alpha subunit of the enzyme binds the substrates coenzyme A and phosphate, while succinate binding and nucleotide specificity is provided by the beta subunit. The protein is Succinate--CoA ligase [ADP-forming] subunit alpha 1 of Archaeoglobus fulgidus (strain ATCC 49558 / DSM 4304 / JCM 9628 / NBRC 100126 / VC-16).